The primary structure comprises 427 residues: Enolase (427 aa).

(2R)-2-phosphoglycerate is bound at residue Gln-162. Glu-204 serves as the catalytic Proton donor. Mg(2+)-binding residues include Asp-241, Glu-282, and Asp-309. (2R)-2-phosphoglycerate contacts are provided by Lys-334, Arg-363, Ser-364, and Lys-385. Lys-334 acts as the Proton acceptor in catalysis.

The protein belongs to the enolase family. Mg(2+) serves as cofactor.

It is found in the cytoplasm. The protein localises to the secreted. Its subcellular location is the cell surface. The catalysed reaction is (2R)-2-phosphoglycerate = phosphoenolpyruvate + H2O. The protein operates within carbohydrate degradation; glycolysis; pyruvate from D-glyceraldehyde 3-phosphate: step 4/5. Catalyzes the reversible conversion of 2-phosphoglycerate (2-PG) into phosphoenolpyruvate (PEP). It is essential for the degradation of carbohydrates via glycolysis. The protein is Enolase of Frankia casuarinae (strain DSM 45818 / CECT 9043 / HFP020203 / CcI3).